A 221-amino-acid chain; its full sequence is Cytidylate kinase (221 aa).

7–15 (GPSASGKSS) contributes to the ATP binding site.

It belongs to the cytidylate kinase family. Type 1 subfamily.

The protein resides in the cytoplasm. The catalysed reaction is CMP + ATP = CDP + ADP. It catalyses the reaction dCMP + ATP = dCDP + ADP. This chain is Cytidylate kinase, found in Borreliella burgdorferi (strain ZS7) (Borrelia burgdorferi).